The chain runs to 150 residues: Large ribosomal subunit protein bL9 (150 aa).

It belongs to the bacterial ribosomal protein bL9 family.

Its function is as follows. Binds to the 23S rRNA. The chain is Large ribosomal subunit protein bL9 from Burkholderia vietnamiensis (strain G4 / LMG 22486) (Burkholderia cepacia (strain R1808)).